The primary structure comprises 156 residues: Ribosomal RNA large subunit methyltransferase H (156 aa).

S-adenosyl-L-methionine is bound by residues Leu-73, Gly-104, and 123–128 (ISSMTL).

Belongs to the RNA methyltransferase RlmH family. In terms of assembly, homodimer.

It localises to the cytoplasm. It carries out the reaction pseudouridine(1915) in 23S rRNA + S-adenosyl-L-methionine = N(3)-methylpseudouridine(1915) in 23S rRNA + S-adenosyl-L-homocysteine + H(+). In terms of biological role, specifically methylates the pseudouridine at position 1915 (m3Psi1915) in 23S rRNA. The chain is Ribosomal RNA large subunit methyltransferase H from Burkholderia ambifaria (strain MC40-6).